A 213-amino-acid polypeptide reads, in one-letter code: ATP-dependent Clp protease proteolytic subunit (213 aa).

S114 acts as the Nucleophile in catalysis. The active site involves H139.

It belongs to the peptidase S14 family. Fourteen ClpP subunits assemble into 2 heptameric rings which stack back to back to give a disk-like structure with a central cavity, resembling the structure of eukaryotic proteasomes.

The protein resides in the cytoplasm. It carries out the reaction Hydrolysis of proteins to small peptides in the presence of ATP and magnesium. alpha-casein is the usual test substrate. In the absence of ATP, only oligopeptides shorter than five residues are hydrolyzed (such as succinyl-Leu-Tyr-|-NHMec, and Leu-Tyr-Leu-|-Tyr-Trp, in which cleavage of the -Tyr-|-Leu- and -Tyr-|-Trp bonds also occurs).. In terms of biological role, cleaves peptides in various proteins in a process that requires ATP hydrolysis. Has a chymotrypsin-like activity. Plays a major role in the degradation of misfolded proteins. The sequence is that of ATP-dependent Clp protease proteolytic subunit from Pseudomonas entomophila (strain L48).